The chain runs to 421 residues: Uracil permease (421 aa).

12 helical membrane passes run 18 to 38, 41 to 61, 65 to 85, 89 to 109, 115 to 135, 160 to 180, 186 to 206, 232 to 252, 304 to 324, 329 to 349, 371 to 391, and 393 to 413; these read IPLS…VPML, INPA…IFLC, IPAY…VIST, EAAL…GLLV, GWIE…VIGL, PKVI…NVMF, IIPI…LGIV, IAII…HLIV, VYSI…SFVG, LIQT…FGVI, ILTA…WGNF, and MKGM…FNII.

The protein belongs to the nucleobase:cation symporter-2 (NCS2) (TC 2.A.40) family.

The protein resides in the cell membrane. Inhibited by the proton gradient disruptor carbonyl cyanide m-chlorophenylhydrazone (CCCP), but not by the sodium gradient disruptor ouabain. Both xanthine and uric acid act as competitive inhibitors of uracil transport. In terms of biological role, specific for the uptake of uracil. Transport is probably proton-dependent. This is Uracil permease from Paenibacillus larvae subsp. larvae (strain NRRL B-3650 / LMG 16245).